Here is a 290-residue protein sequence, read N- to C-terminus: 4-diphosphocytidyl-2-C-methyl-D-erythritol kinase (290 aa).

Residue K10 is part of the active site. 96 to 106 contributes to the ATP binding site; sequence PIAAGLGGGSS. D138 is a catalytic residue.

Belongs to the GHMP kinase family. IspE subfamily.

The catalysed reaction is 4-CDP-2-C-methyl-D-erythritol + ATP = 4-CDP-2-C-methyl-D-erythritol 2-phosphate + ADP + H(+). The protein operates within isoprenoid biosynthesis; isopentenyl diphosphate biosynthesis via DXP pathway; isopentenyl diphosphate from 1-deoxy-D-xylulose 5-phosphate: step 3/6. Functionally, catalyzes the phosphorylation of the position 2 hydroxy group of 4-diphosphocytidyl-2C-methyl-D-erythritol. The protein is 4-diphosphocytidyl-2-C-methyl-D-erythritol kinase of Caulobacter vibrioides (strain NA1000 / CB15N) (Caulobacter crescentus).